The primary structure comprises 637 residues: Phosphomethylpyrimidine synthase (637 aa).

Substrate is bound by residues Asn242, Met271, Tyr300, His336, 356-358, 397-400, and Glu436; these read SRG and DGLR. His440 serves as a coordination point for Zn(2+). Tyr463 lines the substrate pocket. His504 contributes to the Zn(2+) binding site. Residues Cys584, Cys587, and Cys592 each contribute to the [4Fe-4S] cluster site.

This sequence belongs to the ThiC family. Homodimer. [4Fe-4S] cluster serves as cofactor.

It catalyses the reaction 5-amino-1-(5-phospho-beta-D-ribosyl)imidazole + S-adenosyl-L-methionine = 4-amino-2-methyl-5-(phosphooxymethyl)pyrimidine + CO + 5'-deoxyadenosine + formate + L-methionine + 3 H(+). It participates in cofactor biosynthesis; thiamine diphosphate biosynthesis. Its function is as follows. Catalyzes the synthesis of the hydroxymethylpyrimidine phosphate (HMP-P) moiety of thiamine from aminoimidazole ribotide (AIR) in a radical S-adenosyl-L-methionine (SAM)-dependent reaction. This chain is Phosphomethylpyrimidine synthase, found in Bordetella bronchiseptica (strain ATCC BAA-588 / NCTC 13252 / RB50) (Alcaligenes bronchisepticus).